Reading from the N-terminus, the 216-residue chain is Transmembrane emp24 domain-containing protein eca (216 aa).

The signal sequence occupies residues 1–20; the sequence is MRDQILSLALLLCVLHSACG. Residues 21–182 lie on the Lumenal side of the membrane; it reads LYFHISETER…FRHTSESTNS (162 aa). Positions 30–126 constitute a GOLD domain; sequence RKCFIEEVPD…QLRVHLDIQV (97 aa). Residues 134 to 164 are a coiled coil; it reads ANVAQKEKLTELQLRIRQLLDQVEQITKEQN. A helical transmembrane segment spans residues 183 to 203; that stretch reads RVLWWSLAQTVVLVCMGFWQM. Topologically, residues 204-216 are cytoplasmic; it reads RHLKSFFEAKKLV. The Prevents secretion from ER motif lies at 213-216; that stretch reads KKLV.

The protein belongs to the EMP24/GP25L family.

Its subcellular location is the endoplasmic reticulum membrane. In terms of biological role, eca and bai are essential, though not redundant, for dorsoventral patterning of the embryo. Specifically required during early embryogenesis for the activity of maternal tkv, while the zygotic tkv is not affected. Involved in Golgi organization. The chain is Transmembrane emp24 domain-containing protein eca from Drosophila ananassae (Fruit fly).